The sequence spans 202 residues: Nucleoside triphosphate pyrophosphatase (202 aa).

Asp-79 serves as the catalytic Proton acceptor.

This sequence belongs to the Maf family. The cofactor is a divalent metal cation.

It is found in the cytoplasm. It carries out the reaction a ribonucleoside 5'-triphosphate + H2O = a ribonucleoside 5'-phosphate + diphosphate + H(+). The catalysed reaction is a 2'-deoxyribonucleoside 5'-triphosphate + H2O = a 2'-deoxyribonucleoside 5'-phosphate + diphosphate + H(+). Its function is as follows. Nucleoside triphosphate pyrophosphatase. May have a dual role in cell division arrest and in preventing the incorporation of modified nucleotides into cellular nucleic acids. The polypeptide is Nucleoside triphosphate pyrophosphatase (Nitrobacter hamburgensis (strain DSM 10229 / NCIMB 13809 / X14)).